We begin with the raw amino-acid sequence, 260 residues long: Isopentenyl phosphate kinase (260 aa).

ATP is bound at residue 6-10 (KLGGS). G55 serves as a coordination point for substrate. G56 serves as a coordination point for ATP. H60 and G159 together coordinate substrate. The ATP site is built by D180, G217, and K221.

The protein belongs to the isopentenyl phosphate kinase family. In terms of assembly, homodimer.

It catalyses the reaction isopentenyl phosphate + ATP = isopentenyl diphosphate + ADP. In terms of biological role, catalyzes the formation of isopentenyl diphosphate (IPP), the building block of all isoprenoids. Has no activity with farnesyl phosphate. The chain is Isopentenyl phosphate kinase from Methanocaldococcus jannaschii (strain ATCC 43067 / DSM 2661 / JAL-1 / JCM 10045 / NBRC 100440) (Methanococcus jannaschii).